The primary structure comprises 589 residues: MSVSVHENRKSRASSGSINIYLFHKSSYADSVLTHLNLLRQQRLFTDVLLHAGNRTFPCHRAVLAACSRYFEAMFSGGLKESQDSEVNFDNSIHPEVLELLLDYAYSSRVIINEENAESLLEAGDMLEFQDIRDACAEFLEKNLHPTNCLGMLLLSDAHQCTKLYELSWRMCLSNFQTIRKNEDFLQLPQDMVVQLLSSEELETEDERLVYESAMNWISYDLKKRYCYLPELLQTVRLALLPAIYLMENVAMEELITKQRKSKEIVEEAIRCKLKILQNDGVVTSLCARPRKTGHALFLLGGQTFMCDKLYLVDQKAKEIIPKADIPSPRKEFSACAIGCKVYITGGRGSENGVSKDVWVYDTLHEEWSKAAPMLVARFGHGSAELKHCLYVVGGHTAATGCLPASPSVSLKQVEQYDPTTNKWTMVAPLREGVSNAAVVSAKLKLFAFGGTSVSHDKLPKVQCYDQCENRWSVPATCPQPWRYTAAAVLGNQIFIMGGDTEFSACSAYKFNSETYQWTKVGDVTAKRMSCHAVASGNKLYVVGGYFGIQRCKTLDCYDPTLDVWNSITTVPYSLIPTAFVSTWKHLPS.

The 69-residue stretch at threonine 46–glutamate 114 folds into the BTB domain. 6 Kelch repeats span residues alanine 296–cysteine 340, lysine 341–histidine 388, cysteine 389–leucine 444, leucine 446–asparagine 492, isoleucine 494–asparagine 538, and lysine 539–lysine 585.

As to quaternary structure, binds to RB1. Hypophosphorylated RB1 associates with ENC1 during neuronal differentiation, while hyperphosphorylated RB1 associates with ENC1 in undifferentiating cells. Part of a complex that contains CUL3, RBX1 and ENC1. Interacts indirectly with KEAP1. In terms of processing, ubiquitinated by E3 ubiquitin ligase complex formed by CUL3 and RBX1 and probably targeted for proteasome-independent degradation. Quinone-induced oxidative stress increases its ubiquitination. Primarily expressed in the nervous system.

It localises to the nucleus matrix. The protein localises to the cytoplasm. Its subcellular location is the cytoskeleton. Actin-binding protein involved in the regulation of neuronal process formation and in differentiation of neural crest cells. Down-regulates transcription factor NF2L2/NRF2 by decreasing the rate of protein synthesis and not via a ubiquitin-mediated proteasomal degradation mechanism. The polypeptide is Ectoderm-neural cortex protein 1 (Enc1) (Mus musculus (Mouse)).